The primary structure comprises 637 residues: Threonine--tRNA ligase (637 aa).

Positions 1–61 (MPNVKLPDGN…KEDCSLIIVT (61 aa)) constitute a TGS domain. Positions 242 to 533 (DHRKLGKALD…LIEHYAGKLP (292 aa)) are catalytic. Zn(2+) contacts are provided by Cys-333, His-384, and His-510.

This sequence belongs to the class-II aminoacyl-tRNA synthetase family. In terms of assembly, homodimer. Zn(2+) is required as a cofactor.

Its subcellular location is the cytoplasm. The enzyme catalyses tRNA(Thr) + L-threonine + ATP = L-threonyl-tRNA(Thr) + AMP + diphosphate + H(+). Functionally, catalyzes the attachment of threonine to tRNA(Thr) in a two-step reaction: L-threonine is first activated by ATP to form Thr-AMP and then transferred to the acceptor end of tRNA(Thr). Also edits incorrectly charged L-seryl-tRNA(Thr). This Legionella pneumophila subsp. pneumophila (strain Philadelphia 1 / ATCC 33152 / DSM 7513) protein is Threonine--tRNA ligase.